A 339-amino-acid polypeptide reads, in one-letter code: uncharacterized protein (339 aa).

The ABC transporter domain occupies 13 to 243; that stretch reads LSLNKLDVGF…PATPFICEFI (231 aa). 45 to 52 lines the ATP pocket; sequence GPSGSGKS.

It belongs to the ABC transporter superfamily.

The protein resides in the cell inner membrane. Functionally, probably part of a binding-protein-dependent transport system y4fNOP. Probably responsible for energy coupling to the transport system. This is an uncharacterized protein from Sinorhizobium fredii (strain NBRC 101917 / NGR234).